A 158-amino-acid polypeptide reads, in one-letter code: UPF0303 protein SCO2848 (158 aa).

It belongs to the UPF0303 family.

The chain is UPF0303 protein SCO2848 from Streptomyces coelicolor (strain ATCC BAA-471 / A3(2) / M145).